Consider the following 689-residue polypeptide: Armadillo-like helical domain-containing protein 3 (689 aa).

A helical transmembrane segment spans residues 520 to 538; sequence IFTLALMIVNLFNMFITYG.

It belongs to the ARMH3 family. As to quaternary structure, interacts with PI4KB. Interacts with GBF1.

It localises to the golgi apparatus membrane. The protein localises to the cytoplasm. Its function is as follows. Involved in GBF1 recruitment, Golgi maintenance and protein secretion. This is Armadillo-like helical domain-containing protein 3 from Homo sapiens (Human).